The following is a 787-amino-acid chain: Vacuolar protein sorting-associated protein 35A (787 aa).

The residue at position 1 (Met-1) is an N-acetylmethionine.

This sequence belongs to the VPS35 family. As to quaternary structure, component of the retromer complex which consists of VPS29 (MAG1), VPS26 (VPS26A or VPS26B), VPS35 (VPS35A or VPS35B or VPS35C), VPS5/17 (SNX1 or SNX2A or SNX2B). Component of a retromer subcomplex consisting of VPS29 (MAG1), VPS26 (VPS26A or VPS26B), VPS35 (VPS35A or VPS35B or VPS35C). Interacts with RABG3F.

It is found in the cytoplasm. Its subcellular location is the endosome membrane. The protein resides in the prevacuolar compartment membrane. The protein localises to the golgi apparatus. It localises to the trans-Golgi network membrane. Plays a role in vesicular protein sorting. Component of the membrane-associated retromer complex which is essential in endosome-to-Golgi retrograde transport. Also involved in the efficient sorting of seed storage proteins. Binds alone to endosomal membranes and is required for recruitment of VPS26 and VPS29 to membrane. The VPS29-VPS26-VPS35 subcomplex may be involved in recycling of specific cargos from endosome to the plasma membrane. This Arabidopsis thaliana (Mouse-ear cress) protein is Vacuolar protein sorting-associated protein 35A (VPS35A).